We begin with the raw amino-acid sequence, 201 residues long: Small ribosomal subunit protein uS2 (201 aa).

The protein belongs to the universal ribosomal protein uS2 family.

The polypeptide is Small ribosomal subunit protein uS2 (Nanoarchaeum equitans (strain Kin4-M)).